Consider the following 65-residue polypeptide: Large ribosomal subunit protein bL35 (65 aa).

A disordered region spans residues 1–23; sequence MPKIKTNRGAAKRFKKTGTGKVK. A compositionally biased stretch (basic residues) spans 10–23; sequence AAKRFKKTGTGKVK.

It belongs to the bacterial ribosomal protein bL35 family.

This Trichlorobacter lovleyi (strain ATCC BAA-1151 / DSM 17278 / SZ) (Geobacter lovleyi) protein is Large ribosomal subunit protein bL35.